The chain runs to 124 residues: Fluoride-specific ion channel FluC (124 aa).

A run of 4 helical transmembrane segments spans residues 4–24 (VLYI…ISIL), 35–55 (FGTL…YALA), 60–80 (IGPE…TTFS), and 100–120 (LNVL…QQLI). G74 and T77 together coordinate Na(+).

The protein belongs to the fluoride channel Fluc/FEX (TC 1.A.43) family.

The protein resides in the cell inner membrane. The catalysed reaction is fluoride(in) = fluoride(out). With respect to regulation, na(+) is not transported, but it plays an essential structural role and its presence is essential for fluoride channel function. Functionally, fluoride-specific ion channel. Important for reducing fluoride concentration in the cell, thus reducing its toxicity. This Shewanella amazonensis (strain ATCC BAA-1098 / SB2B) protein is Fluoride-specific ion channel FluC.